Reading from the N-terminus, the 393-residue chain is Arginine biosynthesis bifunctional protein ArgJ (393 aa).

6 residues coordinate substrate: Thr-142, Lys-168, Thr-179, Glu-265, Asn-388, and Thr-393. Thr-179 acts as the Nucleophile in catalysis.

The protein belongs to the ArgJ family. As to quaternary structure, heterotetramer of two alpha and two beta chains.

It is found in the cytoplasm. It catalyses the reaction N(2)-acetyl-L-ornithine + L-glutamate = N-acetyl-L-glutamate + L-ornithine. It carries out the reaction L-glutamate + acetyl-CoA = N-acetyl-L-glutamate + CoA + H(+). Its pathway is amino-acid biosynthesis; L-arginine biosynthesis; L-ornithine and N-acetyl-L-glutamate from L-glutamate and N(2)-acetyl-L-ornithine (cyclic): step 1/1. It functions in the pathway amino-acid biosynthesis; L-arginine biosynthesis; N(2)-acetyl-L-ornithine from L-glutamate: step 1/4. Functionally, catalyzes two activities which are involved in the cyclic version of arginine biosynthesis: the synthesis of N-acetylglutamate from glutamate and acetyl-CoA as the acetyl donor, and of ornithine by transacetylation between N(2)-acetylornithine and glutamate. In Geobacter sulfurreducens (strain ATCC 51573 / DSM 12127 / PCA), this protein is Arginine biosynthesis bifunctional protein ArgJ.